The primary structure comprises 358 residues: Peptide chain release factor 1 (358 aa).

At Gln233 the chain carries N5-methylglutamine.

Belongs to the prokaryotic/mitochondrial release factor family. Methylated by PrmC. Methylation increases the termination efficiency of RF1.

The protein resides in the cytoplasm. Functionally, peptide chain release factor 1 directs the termination of translation in response to the peptide chain termination codons UAG and UAA. The protein is Peptide chain release factor 1 of Flavobacterium johnsoniae (strain ATCC 17061 / DSM 2064 / JCM 8514 / BCRC 14874 / CCUG 350202 / NBRC 14942 / NCIMB 11054 / UW101) (Cytophaga johnsonae).